Here is a 1341-residue protein sequence, read N- to C-terminus: Pleckstrin homology domain-containing family G member 3 (1341 aa).

The interval 1-68 (MPVSTALHQD…PNSNNNSSGW (68 aa)) is disordered. The segment covering 18–29 (SLVSTTSSSGSS) has biased composition (low complexity). 2 stretches are compositionally biased toward polar residues: residues 42–51 (SEASAQNGTG) and 59–68 (PNSNNNSSGW). S76 carries the post-translational modification Phosphoserine. The 180-residue stretch at 93-272 (YLGRVVREIV…TCVAWYINDM (180 aa)) folds into the DH domain. Positions 296–394 (DLTTYGELVL…WTHHIKRLIL (99 aa)) constitute a PH domain. Phosphoserine occurs at positions 433 and 502. Residues 433-482 (SQDEVSSHVRQGRRQSEPGHTLFSRATLPSRQQGFEMPGLKGRRKSEPTR) are disordered. 2 disordered regions span residues 508-657 (DFGQ…EFPE) and 684-715 (PEGS…LLPP). Acidic residues-rich tracts occupy residues 529 to 541 (ELEE…EEEE) and 570 to 580 (GSEEEEEEEES). A phosphoserine mark is found at S571, S694, S695, S737, S759, S762, and S766. The segment covering 695-707 (SEEEEEEEMEAAQ) has biased composition (acidic residues). The segment at 775-832 (SIGDSLSNPPTPEVIIGADMVTDNGPSVNGTESPSAGSGCPTEQDRSSCKKKESALST) is disordered. The segment covering 798 to 810 (NGPSVNGTESPSA) has biased composition (polar residues). Over residues 817–832 (EQDRSSCKKKESALST) the composition is skewed to basic and acidic residues. S862, S899, S900, and S947 each carry phosphoserine. Disordered regions lie at residues 876 to 930 (SRFN…EFCP), 939 to 958 (ERME…SQAN), 1071 to 1097 (KVTP…SGGK), and 1117 to 1162 (HGTS…PFDT). Positions 939-948 (ERMESSERSP) are enriched in basic and acidic residues. Residues 949 to 958 (RTGSGQSQAN) are compositionally biased toward polar residues. S1129, S1134, S1136, S1141, S1155, S1158, and S1201 each carry phosphoserine. A compositionally biased stretch (polar residues) spans 1135–1162 (FSPSAVSPRTTSPGARSSARSPLSPFDT). 2 disordered regions span residues 1204 to 1249 (ENIV…LNGG) and 1271 to 1341 (KGPH…NSVG). Residues 1309–1320 (QPKEHGPRDSAD) show a composition bias toward basic and acidic residues.

The protein localises to the cytoplasm. It is found in the cytoskeleton. Functionally, plays a role in controlling cell polarity and cell motility by selectively binding newly polymerized actin and activating RAC1 and CDC42 to enhance local actin polymerization. This is Pleckstrin homology domain-containing family G member 3 from Mus musculus (Mouse).